The sequence spans 595 residues: Elongation factor 4 (595 aa).

A tr-type G domain is found at 2–184 (ETIRNFSIIA…TITHNIPYPK (183 aa)). GTP contacts are provided by residues 14 to 19 (DHGKST) and 131 to 134 (NKID).

Belongs to the TRAFAC class translation factor GTPase superfamily. Classic translation factor GTPase family. LepA subfamily.

The protein resides in the cell membrane. It catalyses the reaction GTP + H2O = GDP + phosphate + H(+). In terms of biological role, required for accurate and efficient protein synthesis under certain stress conditions. May act as a fidelity factor of the translation reaction, by catalyzing a one-codon backward translocation of tRNAs on improperly translocated ribosomes. Back-translocation proceeds from a post-translocation (POST) complex to a pre-translocation (PRE) complex, thus giving elongation factor G a second chance to translocate the tRNAs correctly. Binds to ribosomes in a GTP-dependent manner. In Buchnera aphidicola subsp. Baizongia pistaciae (strain Bp), this protein is Elongation factor 4.